The sequence spans 398 residues: Bifunctional enzyme IspD/IspF (398 aa).

The 2-C-methyl-D-erythritol 4-phosphate cytidylyltransferase stretch occupies residues 1-234; that stretch reads MSNSKRTAAI…SRLGALLGDI (234 aa). Positions 235-398 are 2-C-methyl-D-erythritol 2,4-cyclodiphosphate synthase; sequence RTGTGYDVHA…LPWGTNGLAD (164 aa). 2 residues coordinate a divalent metal cation: Asp241 and His243. Residues 241-243 and 267-268 each bind 4-CDP-2-C-methyl-D-erythritol 2-phosphate; these read DVH and HS. A divalent metal cation is bound at residue His275. Residues 289–291, 365–368, Phe372, and Arg375 each bind 4-CDP-2-C-methyl-D-erythritol 2-phosphate; these read DIG and TTSE.

This sequence in the N-terminal section; belongs to the IspD/TarI cytidylyltransferase family. IspD subfamily. The protein in the C-terminal section; belongs to the IspF family. Requires a divalent metal cation as cofactor.

The enzyme catalyses 2-C-methyl-D-erythritol 4-phosphate + CTP + H(+) = 4-CDP-2-C-methyl-D-erythritol + diphosphate. The catalysed reaction is 4-CDP-2-C-methyl-D-erythritol 2-phosphate = 2-C-methyl-D-erythritol 2,4-cyclic diphosphate + CMP. The protein operates within isoprenoid biosynthesis; isopentenyl diphosphate biosynthesis via DXP pathway; isopentenyl diphosphate from 1-deoxy-D-xylulose 5-phosphate: step 2/6. Its pathway is isoprenoid biosynthesis; isopentenyl diphosphate biosynthesis via DXP pathway; isopentenyl diphosphate from 1-deoxy-D-xylulose 5-phosphate: step 4/6. In terms of biological role, bifunctional enzyme that catalyzes the formation of 4-diphosphocytidyl-2-C-methyl-D-erythritol from CTP and 2-C-methyl-D-erythritol 4-phosphate (MEP) (IspD), and catalyzes the conversion of 4-diphosphocytidyl-2-C-methyl-D-erythritol 2-phosphate (CDP-ME2P) to 2-C-methyl-D-erythritol 2,4-cyclodiphosphate (ME-CPP) with a corresponding release of cytidine 5-monophosphate (CMP) (IspF). This is Bifunctional enzyme IspD/IspF from Rhodopseudomonas palustris (strain BisB18).